A 721-amino-acid polypeptide reads, in one-letter code: WD repeat and coiled-coil-containing protein (721 aa).

Position 1 is an N-acetylmethionine (methionine 1). WD repeat units follow at residues 55 to 98 and 154 to 194; these read GQFE…MESS and NTQG…LHRC. A phosphoserine mark is found at serine 299, serine 468, serine 501, and serine 523. Residues 520–537 are compositionally biased toward polar residues; sequence QPASLPRHSSTPDHTSTL. The segment at 520 to 553 is disordered; sequence QPASLPRHSSTPDHTSTLEPPRLPQRKNLQSEKE. At threonine 530 the chain carries Phosphothreonine. Residues 539 to 545 form an interaction with HCK region; sequence PPRLPQR. A coiled-coil region spans residues 556–584; it reads QLSKEVEILSRNLVEMQRCLSELTNRLHN. A phosphoserine mark is found at serine 686 and serine 690.

Oligomer. Interacts with HCK (via SH3 domain). Phosphorylated on Tyr when associated with HCK.

The protein is WD repeat and coiled-coil-containing protein of Homo sapiens (Human).